Reading from the N-terminus, the 659-residue chain is Alpha-amylase (659 aa).

The first 27 residues, 1–27, serve as a signal peptide directing secretion; sequence MFAKRFKTSLLPLFAGFLLLFHLVLAG. The propeptide occupies 28–41; the sequence is PAAASAETANKSNE. The Ca(2+) site is built by asparagine 142, threonine 178, aspartate 187, glycine 210, and aspartate 212. Aspartate 217 (nucleophile) is an active-site residue. Histidine 221 serves as a coordination point for Ca(2+). Glutamate 249 functions as the Proton donor in the catalytic mechanism.

This sequence belongs to the glycosyl hydrolase 13 family. As to quaternary structure, monomer. It depends on Ca(2+) as a cofactor.

The protein localises to the secreted. The enzyme catalyses Endohydrolysis of (1-&gt;4)-alpha-D-glucosidic linkages in polysaccharides containing three or more (1-&gt;4)-alpha-linked D-glucose units.. This chain is Alpha-amylase (amyE), found in Bacillus subtilis (strain 168).